The primary structure comprises 524 residues: Metalloendopeptidase OMA1, mitochondrial (524 aa).

The N-terminal 13 residues, 1 to 13 (MSFICGLQSAARN), are a transit peptide targeting the mitochondrion. The propeptide occupies 14-143 (HVFFRFNSLS…RNFHTSPRFQ (130 aa)). Residues 144-195 (AAPVPLLLMILKPVQKLFAIIVGRGIRKWWQALPPNKKEVVKENIRKNKWKL) lie on the Mitochondrial matrix side of the membrane. Positions 148-167 (PLLLMILKPVQKLFAIIVGR) are cardiolipin-binding. Residues 165–195 (VGRGIRKWWQALPPNKKEVVKENIRKNKWKL) are stress-sensor region. A helical membrane pass occupies residues 196–216 (FLGLSSFGLLFVVFYFTHLEV). His-327 is a Zn(2+) binding site. The active site involves Glu-328. Zn(2+)-binding residues include His-331 and Glu-392. An intrachain disulfide couples Cys-407 to Cys-465.

This sequence belongs to the peptidase M48 family. In terms of assembly, homooligomer. It depends on Zn(2+) as a cofactor. In terms of processing, may form a redox-dependent disulfide bond. Exists in a semi-oxidized state and is activated by prolonged hypoxia. Post-translationally, autocatalytically cleaved in response to mitochondrial depolarization both at the N-terminus and C-terminus to generate the short active form (S-OMA1). Autocatalytic processing at the C-terminus takes place at residues 447-456. The S-OMA1 form is unstable. OMA1 pre-processing by AFG3L2 may participate in maturation before OMA1 autocatalytic cleavage. Degraded by YMEL1 in response to membrane depolarization. Protein turnover is regulated by prohibitin (PHB and PHB2), which promotes degradation of OMA1 in a cardiolipin-binding manner. Widely expressed, with strong expression in the heart, skeletal muscle, kidney and liver.

The protein localises to the mitochondrion inner membrane. Its activity is regulated as follows. Protease activity is activated upon autocatalytic cleavage in response to mitochondrial depolarization. Metalloprotease that is part of the quality control system in the inner membrane of mitochondria. Activated in response to various mitochondrial stress, leading to the proteolytic cleavage of target proteins, such as OPA1, UQCC3 and DELE1. Involved in the fusion of the mitochondrial inner membranes by mediating cleavage of OPA1 at S1 position, generating the soluble OPA1 (S-OPA1), which cooperates with the membrane form (L-OPA1) to coordinate the fusion of mitochondrial inner membranes. Following stress conditions that induce loss of mitochondrial membrane potential, mediates cleavage of OPA1, leading to excess production of soluble OPA1 (S-OPA1) and negative regulation of mitochondrial fusion. Involved in mitochondrial safeguard in response to transient mitochondrial membrane depolarization (flickering) by catalyzing cleavage of OPA1, leading to excess production of S-OPA1, preventing mitochondrial hyperfusion. Also acts as a regulator of apoptosis: upon BAK and BAX aggregation, mediates cleavage of OPA1, leading to the remodeling of mitochondrial cristae and allowing the release of cytochrome c from mitochondrial cristae. In depolarized mitochondria, may also act as a backup protease for PINK1 by mediating PINK1 cleavage and promoting its subsequent degradation by the proteasome. May also cleave UQCC3 in response to mitochondrial depolarization. Also acts as an activator of the integrated stress response (ISR): in response to mitochondrial stress, mediates cleavage of DELE1 to generate the processed form of DELE1 (S-DELE1), which translocates to the cytosol and activates EIF2AK1/HRI to trigger the ISR. Its role in mitochondrial quality control is essential for regulating lipid metabolism as well as to maintain body temperature and energy expenditure under cold-stress conditions. Binds cardiolipin, possibly regulating its protein turnover. Required for the stability of the respiratory supercomplexes. This Homo sapiens (Human) protein is Metalloendopeptidase OMA1, mitochondrial.